The chain runs to 232 residues: 26.5 kDa heat shock protein, mitochondrial (232 aa).

The N-terminal 42 residues, 1–42 (MALARLALRNLQQKLSPSLMGQSCERGLVGNRHNPMKLNRFM), are a transit peptide targeting the mitochondrion. The tract at residues 44-82 (TSAGEQEDKMNTEVSVSEKKSPRQNFPRRRGRKSLWRNT) is disordered. Residues 49–64 (QEDKMNTEVSVSEKKS) show a composition bias toward basic and acidic residues. Over residues 69 to 78 (FPRRRGRKSL) the composition is skewed to basic residues. The region spanning 114–232 (IFDNFNVNPF…KKNVQEISVE (119 aa)) is the sHSP domain.

The protein belongs to the small heat shock protein (HSP20) family. In terms of assembly, may form oligomeric structures.

It is found in the mitochondrion. The sequence is that of 26.5 kDa heat shock protein, mitochondrial (HSP26.5) from Arabidopsis thaliana (Mouse-ear cress).